Consider the following 491-residue polypeptide: Carbohydrate ABC transporter substrate-binding protein (491 aa).

Residues Asp-212, His-247, His-252, and Glu-256 each contribute to the Zn(2+) site.

Belongs to the bacterial solute-binding protein 1 family. As to quaternary structure, exists as a monomer, homodimer, homotrimer and homotetramer; oligomerization increases with higher protein concentration.

The protein localises to the cell surface. Functionally, probably part of an ABC transporter complex involved in carbohydrate transport. This Streptococcus pneumoniae serotype 4 (strain ATCC BAA-334 / TIGR4) protein is Carbohydrate ABC transporter substrate-binding protein.